A 78-amino-acid chain; its full sequence is Large ribosomal subunit protein bL28 (78 aa).

Positions 1–23 (MSRVCQVSGKRVQTGNNVSHANN) are disordered. Positions 11-22 (RVQTGNNVSHAN) are enriched in polar residues.

Belongs to the bacterial ribosomal protein bL28 family.

The polypeptide is Large ribosomal subunit protein bL28 (Stenotrophomonas maltophilia (strain R551-3)).